A 479-amino-acid chain; its full sequence is Ribosomal RNA small subunit methyltransferase F (479 aa).

S-adenosyl-L-methionine-binding positions include 125–131 (AAAPGSK), E149, D176, and D194. C247 (nucleophile) is an active-site residue.

This sequence belongs to the class I-like SAM-binding methyltransferase superfamily. RsmB/NOP family.

The protein localises to the cytoplasm. The enzyme catalyses cytidine(1407) in 16S rRNA + S-adenosyl-L-methionine = 5-methylcytidine(1407) in 16S rRNA + S-adenosyl-L-homocysteine + H(+). Functionally, specifically methylates the cytosine at position 1407 (m5C1407) of 16S rRNA. This chain is Ribosomal RNA small subunit methyltransferase F, found in Salmonella paratyphi B (strain ATCC BAA-1250 / SPB7).